The following is a 392-amino-acid chain: Dual-specificity RNA methyltransferase RlmN (392 aa).

Glu116 functions as the Proton acceptor in the catalytic mechanism. One can recognise a Radical SAM core domain in the interval 122 to 364 (EEGRGTLCVS…SPIRTPRGED (243 aa)). An intrachain disulfide couples Cys129 to Cys369. 3 residues coordinate [4Fe-4S] cluster: Cys136, Cys140, and Cys143. Residues 195–196 (GE), Ser227, 249–251 (SFH), and Asn326 contribute to the S-adenosyl-L-methionine site. Residue Cys369 is the S-methylcysteine intermediate of the active site.

It belongs to the radical SAM superfamily. RlmN family. [4Fe-4S] cluster serves as cofactor.

Its subcellular location is the cytoplasm. The enzyme catalyses adenosine(2503) in 23S rRNA + 2 reduced [2Fe-2S]-[ferredoxin] + 2 S-adenosyl-L-methionine = 2-methyladenosine(2503) in 23S rRNA + 5'-deoxyadenosine + L-methionine + 2 oxidized [2Fe-2S]-[ferredoxin] + S-adenosyl-L-homocysteine. It catalyses the reaction adenosine(37) in tRNA + 2 reduced [2Fe-2S]-[ferredoxin] + 2 S-adenosyl-L-methionine = 2-methyladenosine(37) in tRNA + 5'-deoxyadenosine + L-methionine + 2 oxidized [2Fe-2S]-[ferredoxin] + S-adenosyl-L-homocysteine. Specifically methylates position 2 of adenine 2503 in 23S rRNA and position 2 of adenine 37 in tRNAs. m2A2503 modification seems to play a crucial role in the proofreading step occurring at the peptidyl transferase center and thus would serve to optimize ribosomal fidelity. In Cereibacter sphaeroides (strain ATCC 17025 / ATH 2.4.3) (Rhodobacter sphaeroides), this protein is Dual-specificity RNA methyltransferase RlmN.